Here is a 976-residue protein sequence, read N- to C-terminus: Vacuolar membrane protease (976 aa).

Residues 1–15 lie on the Cytoplasmic side of the membrane; it reads MKLKSVFRSVLKYRK. Residues 16–36 form a helical membrane-spanning segment; the sequence is TNLSLLLLITYSIITLLYIFD. At 37-359 the chain is on the vacuolar side; sequence HERYKLNLPK…KFFVISAKTL (323 aa). Residues Asn-96 and Asn-121 are each glycosylated (N-linked (GlcNAc...) asparagine). The Zn(2+) site is built by His-156 and Asp-168. N-linked (GlcNAc...) asparagine glycosylation is present at Asn-189. Residue Glu-200 is the Proton acceptor of the active site. Glu-201 is a binding site for Zn(2+). N-linked (GlcNAc...) asparagine glycans are attached at residues Asn-212 and Asn-217. Residues Glu-226 and His-300 each coordinate Zn(2+). Residues 360–380 traverse the membrane as a helical segment; the sequence is FYWNCIFLLVSPVVAIGLYLI. Over 381 to 392 the chain is Cytoplasmic; it reads SRDRMTWKSHSW. A helical membrane pass occupies residues 393-412; that stretch reads LSWTRFPLSLAAGIIVQKLF. Over 413 to 428 the chain is Vacuolar; sequence SNDIIRSNPLTFSRNY. Residues 429-449 form a helical membrane-spanning segment; the sequence is FWPISAFFTQVIFTSYVLINC. Residues 450 to 461 lie on the Cytoplasmic side of the membrane; the sequence is SNFFFPCADMKS. Residues 462 to 482 form a helical membrane-spanning segment; that stretch reads LSIIELFIILWTILLFTSKLL. The Vacuolar portion of the chain corresponds to 483 to 496; sequence YSSDYRYTGLYPLS. A helical transmembrane segment spans residues 497-517; sequence IFFLLSTIAAILRLLALALGM. Over 518-627 the chain is Cytoplasmic; it reads RTRKRLGREC…NSLKLEYTDY (110 aa). The segment at 528-610 is disordered; it reads RDHHSNYSSH…PLLKGSNSME (83 aa). Residues 549–558 show a composition bias toward polar residues; the sequence is NLEQPQDQFT. Residues 559–570 are compositionally biased toward low complexity; that stretch reads SSQDDQASIQDD. Over residues 582-601 the composition is skewed to basic and acidic residues; sequence NVDEDHGMDSSSQQHDERVP. A helical transmembrane segment spans residues 628–648; that stretch reads AWIIQFLLIVPIPSFILFNSV. The Vacuolar segment spans residues 649-668; it reads DVIMDALNHTVQEGSKATFD. N-linked (GlcNAc...) asparagine glycosylation is present at Asn-656. The chain crosses the membrane as a helical span at residues 669 to 689; the sequence is VLRFGMVGSILMALPILPFFY. Residues 690-692 lie on the Cytoplasmic side of the membrane; it reads KVN. A helical membrane pass occupies residues 693-713; that stretch reads YITISLTALLFLISASKTLLV. The Vacuolar portion of the chain corresponds to 714–976; the sequence is HPFTNSNPLK…LVIVKDAIIL (263 aa). N-linked (GlcNAc...) asparagine glycosylation is found at Asn-768, Asn-796, Asn-811, Asn-866, and Asn-937.

The protein belongs to the peptidase M28 family. Requires Zn(2+) as cofactor.

It is found in the vacuole membrane. In terms of biological role, may be involved in vacuolar sorting and osmoregulation. The chain is Vacuolar membrane protease from Saccharomyces cerevisiae (strain RM11-1a) (Baker's yeast).